The chain runs to 344 residues: Centromere protein L (344 aa).

Position 39 is a phosphoserine (Ser39). Thr43 carries the phosphothreonine modification. Ser53 carries the phosphoserine modification.

Belongs to the CENP-L/IML3 family. In terms of assembly, component of the CENPA-CAD complex, composed of CENPI, CENPK, CENPL, CENPO, CENPP, CENPQ, CENPR and CENPS. The CENPA-CAD complex interacts with the CENPA-NAC complex, at least composed of CENPA, CENPC, CENPH, CENPM, CENPN, CENPT and CENPU.

It localises to the nucleus. The protein resides in the chromosome. The protein localises to the centromere. In terms of biological role, component of the CENPA-CAD (nucleosome distal) complex, a complex recruited to centromeres which is involved in assembly of kinetochore proteins, mitotic progression and chromosome segregation. May be involved in incorporation of newly synthesized CENPA into centromeres via its interaction with the CENPA-NAC complex. The chain is Centromere protein L (CENPL) from Homo sapiens (Human).